A 142-amino-acid chain; its full sequence is Hemoglobin subunit alpha-A (142 aa).

One can recognise a Globin domain in the interval 2–142; it reads VLTAGDKANV…VATALTSKYR (141 aa). Residues His-59 and His-88 each contribute to the heme b site.

It belongs to the globin family. In terms of assembly, heterotetramer of two alpha-A chains and two beta chains. As to expression, red blood cells.

In terms of biological role, involved in oxygen transport from the lung to the various peripheral tissues. In Chelonoidis niger (Galapagos giant tortoise), this protein is Hemoglobin subunit alpha-A.